Reading from the N-terminus, the 340-residue chain is Phosphoribosylformylglycinamidine cyclo-ligase (340 aa).

It belongs to the AIR synthase family.

Its subcellular location is the cytoplasm. The catalysed reaction is 2-formamido-N(1)-(5-O-phospho-beta-D-ribosyl)acetamidine + ATP = 5-amino-1-(5-phospho-beta-D-ribosyl)imidazole + ADP + phosphate + H(+). It functions in the pathway purine metabolism; IMP biosynthesis via de novo pathway; 5-amino-1-(5-phospho-D-ribosyl)imidazole from N(2)-formyl-N(1)-(5-phospho-D-ribosyl)glycinamide: step 2/2. The chain is Phosphoribosylformylglycinamidine cyclo-ligase from Streptococcus pneumoniae serotype 19F (strain G54).